Here is a 76-residue protein sequence, read N- to C-terminus: Acyl carrier protein (76 aa).

The Carrier domain maps to 1-76 (MSVEEKVKKI…DAIDYVSNKQ (76 aa)). Serine 36 is subject to O-(pantetheine 4'-phosphoryl)serine.

It belongs to the acyl carrier protein (ACP) family. In terms of processing, 4'-phosphopantetheine is transferred from CoA to a specific serine of apo-ACP by AcpS. This modification is essential for activity because fatty acids are bound in thioester linkage to the sulfhydryl of the prosthetic group.

The protein localises to the cytoplasm. It functions in the pathway lipid metabolism; fatty acid biosynthesis. Carrier of the growing fatty acid chain in fatty acid biosynthesis. In Nitratidesulfovibrio vulgaris (strain ATCC 29579 / DSM 644 / CCUG 34227 / NCIMB 8303 / VKM B-1760 / Hildenborough) (Desulfovibrio vulgaris), this protein is Acyl carrier protein.